We begin with the raw amino-acid sequence, 284 residues long: MFAIIGPTASGKSDLAIKLALKLNYEILSLDSLSIYKEIDIASAKPSKEELSKVKHYGVNEIYPNEKFDVMKFIEIYKKIPHKNIIIVGGTGFYLKAMLEGISQMPEITDEIKKKAKQKDYAFFESVDPDFASKISPNDTYRIQKGLEIYFATKTPPSVYFKNNPPKPVLPDIPIFEIAVDRSVLRERIKKRTDKMFNSGLIDEVAYLEKKYRDRRLPALKAIGIKEVLDYFNGKYTLKTLKEKIITNTARLAKRQQTFNKTQFKKKISAPLEELEEIILSEIK.

Residue 6–13 participates in ATP binding; sequence GPTASGKS. 8–13 provides a ligand contact to substrate; the sequence is TASGKS. The interaction with substrate tRNA stretch occupies residues 31–34; that stretch reads DSLS.

Belongs to the IPP transferase family. In terms of assembly, monomer. It depends on Mg(2+) as a cofactor.

The catalysed reaction is adenosine(37) in tRNA + dimethylallyl diphosphate = N(6)-dimethylallyladenosine(37) in tRNA + diphosphate. Functionally, catalyzes the transfer of a dimethylallyl group onto the adenine at position 37 in tRNAs that read codons beginning with uridine, leading to the formation of N6-(dimethylallyl)adenosine (i(6)A). In Nautilia profundicola (strain ATCC BAA-1463 / DSM 18972 / AmH), this protein is tRNA dimethylallyltransferase.